We begin with the raw amino-acid sequence, 104 residues long: MIRKAFVMQVNPDAHEEYQRRHNPIWPELEAVLKSHGAHNYAIYLDKARNLLFATVEIESEERWNAVASTDVCQRWWKYMTDVMPANPDNSPVSSELQEVFYLP.

Tyr-18 serves as a coordination point for substrate. The active-site Proton donor is the His-22. Substrate is bound by residues Tyr-41 and 76–77 (WW).

This sequence belongs to the rhamnose mutarotase family. In terms of assembly, homodimer.

It is found in the cytoplasm. It catalyses the reaction alpha-L-rhamnose = beta-L-rhamnose. Its pathway is carbohydrate metabolism; L-rhamnose metabolism. Involved in the anomeric conversion of L-rhamnose. The polypeptide is L-rhamnose mutarotase (Shigella sonnei (strain Ss046)).